A 325-amino-acid chain; its full sequence is Tagatose 1,6-diphosphate aldolase 1 (325 aa).

This sequence belongs to the aldolase LacD family.

The enzyme catalyses D-tagatofuranose 1,6-bisphosphate = D-glyceraldehyde 3-phosphate + dihydroxyacetone phosphate. Its pathway is carbohydrate metabolism; D-tagatose 6-phosphate degradation; D-glyceraldehyde 3-phosphate and glycerone phosphate from D-tagatose 6-phosphate: step 2/2. In Streptococcus mutans serotype c (strain ATCC 700610 / UA159), this protein is Tagatose 1,6-diphosphate aldolase 1 (lacD1).